We begin with the raw amino-acid sequence, 601 residues long: Cdc42-interacting protein 4 (601 aa).

Positions 1–117 are required for podosome formation and interaction with AKAP9 and microtubules; sequence MDWGTELWDQ…EMKQERKMHF (117 aa). Residues 1 to 117 form a required for translocation to the plasma membrane in response to insulin region; sequence MDWGTELWDQ…EMKQERKMHF (117 aa). An F-BAR domain is found at 1–264; that stretch reads MDWGTELWDQ…AANAVDPKND (264 aa). Residues 67 to 259 are a coiled coil; it reads FSQQQSFVQI…EGMKVAANAV (193 aa). Disordered stretches follow at residues 280-358, 390-420, and 479-543; these read GDVE…GRDP, DFSH…EVDQ, and RGDS…SPIG. Positions 289-302 are enriched in polar residues; sequence QPMNRAPSDSSLGT. An interaction with CDC42 region spans residues 293-537; it reads RAPSDSSLGT…TEFDEDFEEE (245 aa). Residues 293–601 form an interaction with PDE6G region; it reads RAPSDSSLGT…PTSYLRVTLN (309 aa). Residues Ser-296, Ser-298, and Ser-299 each carry the phosphoserine modification. Residues 314-329 are compositionally biased toward basic residues; that stretch reads GRSRTKRWPFGKKNKP. At Ser-335 the chain carries Phosphoserine. The segment covering 336-346 has biased composition (low complexity); it reads PLGGPVPSALP. Ser-351 is subject to Phosphoserine. A coiled-coil region spans residues 388-481; the sequence is TEDFSHLPPE…ESRVLSNRGD (94 aa). The REM-1 domain maps to 393–470; it reads HLPPEQQRKR…VQKYEAWLAE (78 aa). Residues 407–420 show a composition bias toward basic and acidic residues; that stretch reads LEERSRELQKEVDQ. Positions 471–601 are required for interaction with FASLG and localization to lysosomes; sequence AESRVLSNRG…PTSYLRVTLN (131 aa). Ser-482 bears the Phosphoserine mark. Residues 487 to 541 are interaction with DNM2 and WASL; the sequence is ARPPDPPASAPPDSSSNSASQDTKESSEEPPSEESQDTPIYTEFDEDFEEEPTSP. The span at 497-506 shows a compositional bias: low complexity; that stretch reads PPDSSSNSAS. The span at 529–538 shows a compositional bias: acidic residues; that stretch reads EFDEDFEEEP. The interaction with DNM1 and WASL stretch occupies residues 529-601; that stretch reads EFDEDFEEEP…PTSYLRVTLN (73 aa). A required for podosome formation region spans residues 538–601; sequence PTSPIGHCVA…PTSYLRVTLN (64 aa). The region spanning 540 to 601 is the SH3 domain; that stretch reads SPIGHCVAIY…PTSYLRVTLN (62 aa). The tract at residues 544-601 is interaction with WAS; sequence HCVAIYHFEGSSEGTISMAEGEDLSLMEEDKGDGWTRVRRKEGGEGYVPTSYLRVTLN. The interaction with ARHGAP17, DAAM1, DIAPH1 and DIAPH2 stretch occupies residues 546 to 601; sequence VAIYHFEGSSEGTISMAEGEDLSLMEEDKGDGWTRVRRKEGGEGYVPTSYLRVTLN.

Belongs to the FNBP1 family. Interacts specifically with GTP-bound RHOQ. Interacts with DNM2 and PDE6G. Homodimerizes, the dimers can polymerize end-to-end to form filamentous structures. Interacts specifically with GTP-bound CDC42. Interacts with AKAP9, ARHGAP17, DAAM1, DIAPH1, DIAPH2, DNM1, FASLG/FASL, GAPVD1, LYN, microtubules, SRC, WAS/WASP and WASL/N-WASP. Interacts with the ligand binding domain of the thyroid receptor (TR) in the presence of thyroid hormone. May interact with CTNNB1 and HD/HTT. Post-translationally, tyrosine phosphorylated. Also phosphorylated by PKA. In terms of tissue distribution, expressed in brain, colon, heart, kidney, liver, lung, megakaryocyte, ovary, pancreas, peripheral blood lymphocytes, placenta, prostate, skeletal muscle, small intestine, spleen, testis, thymus and trachea.

It localises to the cytoplasm. Its subcellular location is the cytoskeleton. The protein resides in the cell cortex. It is found in the lysosome. The protein localises to the golgi apparatus. It localises to the cell membrane. Its subcellular location is the cell projection. The protein resides in the phagocytic cup. It is found in the perinuclear region. Its function is as follows. Required for translocation of GLUT4 to the plasma membrane in response to insulin signaling. Required to coordinate membrane tubulation with reorganization of the actin cytoskeleton during endocytosis. Binds to lipids such as phosphatidylinositol 4,5-bisphosphate and phosphatidylserine and promotes membrane invagination and the formation of tubules. Also promotes CDC42-induced actin polymerization by recruiting WASL/N-WASP which in turn activates the Arp2/3 complex. Actin polymerization may promote the fission of membrane tubules to form endocytic vesicles. Required for the formation of podosomes, actin-rich adhesion structures specific to monocyte-derived cells. May be required for the lysosomal retention of FASLG/FASL. This chain is Cdc42-interacting protein 4 (TRIP10), found in Homo sapiens (Human).